A 255-amino-acid chain; its full sequence is uncharacterized protein (255 aa).

The signal sequence occupies residues 1 to 23; the sequence is MKRLNKLVLGIIFLFLVISITAG. The N-palmitoyl cysteine moiety is linked to residue Cys24. Cys24 is lipidated: S-diacylglycerol cysteine.

This sequence belongs to the staphylococcal tandem lipoprotein family.

The protein resides in the cell membrane. This is an uncharacterized protein from Staphylococcus aureus (strain USA300).